The chain runs to 219 residues: 7-cyano-7-deazaguanine synthase (219 aa).

10–20 serves as a coordination point for ATP; that stretch reads FSGGQDSTTCL. Residues Cys-188, Cys-197, Cys-200, and Cys-203 each contribute to the Zn(2+) site.

Belongs to the QueC family. As to quaternary structure, homodimer. Requires Zn(2+) as cofactor.

It catalyses the reaction 7-carboxy-7-deazaguanine + NH4(+) + ATP = 7-cyano-7-deazaguanine + ADP + phosphate + H2O + H(+). Its pathway is purine metabolism; 7-cyano-7-deazaguanine biosynthesis. Its function is as follows. Catalyzes the ATP-dependent conversion of 7-carboxy-7-deazaguanine (CDG) to 7-cyano-7-deazaguanine (preQ(0)). The chain is 7-cyano-7-deazaguanine synthase from Clostridium botulinum (strain Kyoto / Type A2).